Consider the following 418-residue polypeptide: Trans-acting enoyl reductase (418 aa).

Belongs to the saccharopine dehydrogenase family. Enoyl reductase subfamily.

Its function is as follows. Involved in the reduction of the double bond between C-4 and C-5 during phthiocerol dimycocerosates (DIM A) and glycosylated phenolphthiocerol dimycocerosates (PGL) biosynthesis. This chain is Trans-acting enoyl reductase, found in Mycobacterium tuberculosis (strain ATCC 25177 / H37Ra).